Reading from the N-terminus, the 407-residue chain is Methylthioribose-1-phosphate isomerase (407 aa).

Asp275 serves as the catalytic Proton donor.

The protein belongs to the eIF-2B alpha/beta/delta subunits family. MtnA subfamily.

It localises to the cytoplasm. Its subcellular location is the nucleus. The enzyme catalyses 5-(methylsulfanyl)-alpha-D-ribose 1-phosphate = 5-(methylsulfanyl)-D-ribulose 1-phosphate. It functions in the pathway amino-acid biosynthesis; L-methionine biosynthesis via salvage pathway; L-methionine from S-methyl-5-thio-alpha-D-ribose 1-phosphate: step 1/6. Catalyzes the interconversion of methylthioribose-1-phosphate (MTR-1-P) into methylthioribulose-1-phosphate (MTRu-1-P). In Kluyveromyces lactis (strain ATCC 8585 / CBS 2359 / DSM 70799 / NBRC 1267 / NRRL Y-1140 / WM37) (Yeast), this protein is Methylthioribose-1-phosphate isomerase.